Reading from the N-terminus, the 266-residue chain is Putative carbamate hydrolase RutD (266 aa).

It belongs to the AB hydrolase superfamily. Hydrolase RutD family.

It catalyses the reaction carbamate + 2 H(+) = NH4(+) + CO2. Its function is as follows. Involved in pyrimidine catabolism. May facilitate the hydrolysis of carbamate, a reaction that can also occur spontaneously. In Enterobacter cloacae subsp. cloacae (strain ATCC 13047 / DSM 30054 / NBRC 13535 / NCTC 10005 / WDCM 00083 / NCDC 279-56), this protein is Putative carbamate hydrolase RutD.